A 279-amino-acid polypeptide reads, in one-letter code: Aspartate/glutamate leucyltransferase (279 aa).

Residues 245–279 are disordered; the sequence is ARERGARPPRGPGALKDACDLPLSDAQPADIEDLD.

This sequence belongs to the R-transferase family. Bpt subfamily.

The protein localises to the cytoplasm. It catalyses the reaction N-terminal L-glutamyl-[protein] + L-leucyl-tRNA(Leu) = N-terminal L-leucyl-L-glutamyl-[protein] + tRNA(Leu) + H(+). The catalysed reaction is N-terminal L-aspartyl-[protein] + L-leucyl-tRNA(Leu) = N-terminal L-leucyl-L-aspartyl-[protein] + tRNA(Leu) + H(+). In terms of biological role, functions in the N-end rule pathway of protein degradation where it conjugates Leu from its aminoacyl-tRNA to the N-termini of proteins containing an N-terminal aspartate or glutamate. The protein is Aspartate/glutamate leucyltransferase of Caulobacter vibrioides (strain ATCC 19089 / CIP 103742 / CB 15) (Caulobacter crescentus).